Here is a 268-residue protein sequence, read N- to C-terminus: L-gamma-glutamyl-L-propargylglycine hydroxylase (268 aa).

The cofactor is Fe(2+).

The catalysed reaction is L-gamma-glutamyl-L-propargylglycine + 2-oxoglutarate + O2 = L-gamma-glutamyl-(3R)-L-beta-ethynylserine + succinate + CO2. It participates in amino-acid metabolism. Its pathway is antibiotic biosynthesis. Functionally, involved in the biosynthesis of terminal alkyne-containing amino acids such as L-beta-ethynylserine, that are produced as antibiotics by S.cattleya. Catalyzes the hydroxylation of the dipeptide L-gamma-glutamyl-L-propargylglycine, leading to L-gamma-glutamyl-L-beta-ethynylserine. Cannot use L-propargylglycine as substrate. The protein is L-gamma-glutamyl-L-propargylglycine hydroxylase of Streptantibioticus cattleyicolor (strain ATCC 35852 / DSM 46488 / JCM 4925 / NBRC 14057 / NRRL 8057) (Streptomyces cattleya).